The sequence spans 936 residues: F-box protein dre-1 (936 aa).

Residues 1–67 are disordered; sequence MSSSSSPFFH…GSSEADNPTL (67 aa). Residues 22 to 36 are compositionally biased toward low complexity; it reads QQSPSYSQNSNSPSQ. Residues 48–63 show a composition bias toward polar residues; that stretch reads GSTSMRYSPSGSSEAD. Positions 159-205 constitute an F-box domain; it reads QDHINRLPEELLLKVFSFLPDKSLLACSSVSYRFNQISNSHEVWKEL. 18 PbH1 repeats span residues 405 to 427, 428 to 450, 451 to 473, 474 to 496, 497 to 519, 520 to 542, 543 to 565, 566 to 588, 589 to 611, 612 to 634, 635 to 657, 658 to 680, 681 to 703, 704 to 726, 727 to 749, 750 to 772, 773 to 795, and 796 to 818; these read SAAPKFKYCTVLDCENVGIYITD, NATGHYEHCEIARNTLAGVWVKN, HANPYFRKCTIHSGKDVGVFTFE, HGQGYFEKCNIHSNRISGIEVKN, SANPVVIRCEVHHGYTGGIYVHE, RGRGQFMENRIYANAYAGIWITS, HSDPTIRKNEIFTGQQGGVYIFG, EGRGLIEQNNIYGNALAGIQIRS, QSDPIVRLNKIHDGLHGGIYVHE, KGRGLIEENEVYGNTLAGIWVTT, GSSPILRKNRIHSGKQVGVYFYD, QGHGLLEENDIFNHLYSGVQIRT, GSNPKITRNKIWGGQNGGVLVYN, GGKGCLEDNEIFDNAMAGVWIKT, DSEPTLRRNKIYDGRDGGVCIFN, RGKGLLEDNEIFRNAQAGVLIST, ESNPTLRRNRVFDGKSAGIEITN, and GATATLEENQLFRNKYGGLCVAT. Residues 843 to 914 form a UBR-type zinc finger; the sequence is GLCLFKVSSN…LERHCHLQNV (72 aa).

As to quaternary structure, component of a SCF ubiquitin ligase complex. Interacts (via F-box) with skr-1. Interacts with blmp-1; the interaction targets blmp-1 for proteasomal degradation. Interacts with ced-9; the interaction inhibits ced-9 activity, either directly or indirectly. In mid-embryogenesis, expression is most prominent in epidermal and intestinal cells. By the 1.5-fold stage of embryogenesis, expression is additionally detected in neurons and other cells. During larval and adult stages, highest expression is seen in epidermal seam cells and hypodermis. In larvae, strongly expressed in the P epidermal blast cells and descendents that give rise to the vulva and weakly expressed in the somatic gonad, including the gonadoblasts, the anchor cell and the distal tip cells. Some weak expression also seen in adult spermatheca and uterus. In the musculature, expressed in the pharynx, anal depressor, sex muscles, and body wall muscles. Detected in neurons of the head, tail, ventral cord and periphery. Also expressed in the embryonic tail spike cell.

It is found in the nucleus. The protein resides in the cytoplasm. It functions in the pathway protein modification; protein ubiquitination. Its function is as follows. Substrate recognition component of a SCF (SKP1-CUL1-F-box protein) E3 ubiquitin-protein ligase complex which mediates the ubiquitination and subsequent proteasomal degradation of target proteins including blmp-1. Promotes ubiquitination of snail family proteins ces-1, scrt-1 and snai-1. Heterochronic protein which is required for the timing of gonad development and epidermal seam cell differentiation. Regulates tail-spike cell death through inhibition of the apoptosis regulator ced-9. The polypeptide is F-box protein dre-1 (Caenorhabditis elegans).